Here is a 155-residue protein sequence, read N- to C-terminus: Small ribosomal subunit protein uS7c (155 aa).

It belongs to the universal ribosomal protein uS7 family. In terms of assembly, part of the 30S ribosomal subunit.

The protein localises to the plastid. It localises to the chloroplast. Functionally, one of the primary rRNA binding proteins, it binds directly to 16S rRNA where it nucleates assembly of the head domain of the 30S subunit. In Lilium superbum (Turk's cap lily), this protein is Small ribosomal subunit protein uS7c (rps7).